The following is a 507-amino-acid chain: ATP synthase subunit alpha, chloroplastic (507 aa).

170–177 serves as a coordination point for ATP; sequence GDRQTGKT.

It belongs to the ATPase alpha/beta chains family. F-type ATPases have 2 components, CF(1) - the catalytic core - and CF(0) - the membrane proton channel. CF(1) has five subunits: alpha(3), beta(3), gamma(1), delta(1), epsilon(1). CF(0) has four main subunits: a, b, b' and c.

The protein resides in the plastid. It localises to the chloroplast thylakoid membrane. The catalysed reaction is ATP + H2O + 4 H(+)(in) = ADP + phosphate + 5 H(+)(out). Produces ATP from ADP in the presence of a proton gradient across the membrane. The alpha chain is a regulatory subunit. The chain is ATP synthase subunit alpha, chloroplastic from Panax ginseng (Korean ginseng).